The following is a 513-amino-acid chain: ATP synthase subunit alpha (513 aa).

169 to 176 (GDRQTGKT) contributes to the ATP binding site.

The protein belongs to the ATPase alpha/beta chains family. As to quaternary structure, F-type ATPases have 2 components, CF(1) - the catalytic core - and CF(0) - the membrane proton channel. CF(1) has five subunits: alpha(3), beta(3), gamma(1), delta(1), epsilon(1). CF(0) has three main subunits: a(1), b(2) and c(9-12). The alpha and beta chains form an alternating ring which encloses part of the gamma chain. CF(1) is attached to CF(0) by a central stalk formed by the gamma and epsilon chains, while a peripheral stalk is formed by the delta and b chains.

It is found in the cell inner membrane. It catalyses the reaction ATP + H2O + 4 H(+)(in) = ADP + phosphate + 5 H(+)(out). Functionally, produces ATP from ADP in the presence of a proton gradient across the membrane. The alpha chain is a regulatory subunit. The polypeptide is ATP synthase subunit alpha (Salmonella agona (strain SL483)).